The following is a 456-amino-acid chain: Probable polygalacturonase At3g15720 (456 aa).

A signal peptide spans 1–23 (MKKKTWFLNFSLFFLQIFTSSNA). PbH1 repeat units follow at residues 169–195 (CNYVTISSLRINAPESSPNTDGIDVGA), 196–217 (SSNVVIQDCIIATGDDCIAINS), 219–239 (TSNIHISGIDCGPGHGISIGS), 249–270 (VENVCVQNCNFRGTMNGARIKT), 278–299 (ARMITFNGITLDNVENPIIIDQ), and 314–341 (SSAVEVSKVVFSNFIGTSKSEYGVDFRC). The active-site Proton donor is the Asp210. His233 is a catalytic residue.

It belongs to the glycosyl hydrolase 28 family.

The protein resides in the secreted. It localises to the cell wall. The catalysed reaction is (1,4-alpha-D-galacturonosyl)n+m + H2O = (1,4-alpha-D-galacturonosyl)n + (1,4-alpha-D-galacturonosyl)m.. The sequence is that of Probable polygalacturonase At3g15720 from Arabidopsis thaliana (Mouse-ear cress).